The chain runs to 191 residues: Protein YceI (191 aa).

An N-terminal signal peptide occupies residues 1 to 22 (MKKSLLGLTFASLMFSAGSAVA).

The protein belongs to the UPF0312 family. Type 1 subfamily.

Its subcellular location is the periplasm. The sequence is that of Protein YceI from Escherichia coli O17:K52:H18 (strain UMN026 / ExPEC).